The chain runs to 617 residues: Lipoteichoic acid synthase-like YvgJ (617 aa).

Residues 1–10 (MKGTFFHNQR) are Cytoplasmic-facing. Residues 11–31 (FLCFSILFMWIKTYVIYKLGF) traverse the membrane as a helical segment. Over 32 to 41 (DLQIDTLLEE) the chain is Extracellular. Residues 42-62 (LMLLVNPLSFILPLFGIGLFL) form a helical membrane-spanning segment. Topologically, residues 63 to 68 (KENKQR) are cytoplasmic. A helical membrane pass occupies residues 69–89 (AFLLIANLVLTVILISNTIFY). Over 90 to 115 (GFYIDFITIPVLFQASNMSDMGSSVK) the chain is Extracellular. Residues 116-136 (ELFHPLFIALFVDLVFLLLFA) traverse the membrane as a helical segment. Residues 137–153 (RKTKHPQTKAAPHTIKR) are Cytoplasmic-facing. The chain crosses the membrane as a helical span at residues 154 to 171 (YYAASCGMLLCTLALAEV). Residues 172–617 (QQPKLLAHSF…LNGDLLRFSE (446 aa)) lie on the Extracellular side of the membrane. Residues Glu251 and Thr293 each coordinate Mn(2+). The active site involves Thr293. His408 serves as a coordination point for substrate. Asp467 and His468 together coordinate Mn(2+).

Belongs to the LTA synthase family. Proteolytically cleaved.

It is found in the cell membrane. The protein resides in the secreted. The chain is Lipoteichoic acid synthase-like YvgJ (yvgJ) from Bacillus subtilis (strain 168).